An 88-amino-acid polypeptide reads, in one-letter code: RQC P-site tRNA stabilizing factor (88 aa).

An S4 RNA-binding domain is found at M1–V67.

This sequence belongs to the RqcP family. Associates with stalled 50S ribosomal subunits. Binds to RqcH, 23S rRNA and the P-site tRNA. Does not require RqcH for association with 50S subunits.

In terms of biological role, key component of the ribosome quality control system (RQC), a ribosome-associated complex that mediates the extraction of incompletely synthesized nascent chains from stalled ribosomes and their subsequent degradation. RqcH recruits Ala-charged tRNA, and with RqcP directs the elongation of stalled nascent chains on 50S ribosomal subunits, leading to non-templated C-terminal alanine extensions (Ala tail). The Ala tail promotes nascent chain degradation. RqcP is associated with the translocation-like movement of the peptidyl-tRNA from the A-site into the P-site. The chain is RQC P-site tRNA stabilizing factor from Halalkalibacterium halodurans (strain ATCC BAA-125 / DSM 18197 / FERM 7344 / JCM 9153 / C-125) (Bacillus halodurans).